The primary structure comprises 269 residues: Thymidylate synthase (269 aa).

DUMP is bound at residue R21. H51 contacts (6R)-5,10-methylene-5,6,7,8-tetrahydrofolate. 126–127 (RR) serves as a coordination point for dUMP. The Nucleophile role is filled by C146. DUMP is bound by residues 171 to 174 (RSGD), N182, and 212 to 214 (HLY). D174 is a (6R)-5,10-methylene-5,6,7,8-tetrahydrofolate binding site. (6R)-5,10-methylene-5,6,7,8-tetrahydrofolate is bound at residue A268.

The protein belongs to the thymidylate synthase family. Bacterial-type ThyA subfamily. Homodimer.

It is found in the cytoplasm. It carries out the reaction dUMP + (6R)-5,10-methylene-5,6,7,8-tetrahydrofolate = 7,8-dihydrofolate + dTMP. The protein operates within pyrimidine metabolism; dTTP biosynthesis. Functionally, catalyzes the reductive methylation of 2'-deoxyuridine-5'-monophosphate (dUMP) to 2'-deoxythymidine-5'-monophosphate (dTMP) while utilizing 5,10-methylenetetrahydrofolate (mTHF) as the methyl donor and reductant in the reaction, yielding dihydrofolate (DHF) as a by-product. This enzymatic reaction provides an intracellular de novo source of dTMP, an essential precursor for DNA biosynthesis. The protein is Thymidylate synthase of Methylocella silvestris (strain DSM 15510 / CIP 108128 / LMG 27833 / NCIMB 13906 / BL2).